The primary structure comprises 99 residues: Small ribosomal subunit protein bS20 (99 aa).

It belongs to the bacterial ribosomal protein bS20 family.

Functionally, binds directly to 16S ribosomal RNA. This chain is Small ribosomal subunit protein bS20, found in Cyanothece sp. (strain PCC 7425 / ATCC 29141).